The sequence spans 115 residues: Movement protein TGB2 (115 aa).

Residues 1-13 are Cytoplasmic-facing; it reads MSAQGHRLTAPVN. A helical membrane pass occupies residues 14–34; that stretch reads SEKVYIVLGLSFALVSITFLL. The Lumenal portion of the chain corresponds to 35 to 74; it reads SRNSLPHVGDNIHSLPHGGAYRDGTKAILYNSPNLGSRVS. A helical membrane pass occupies residues 75–95; it reads LHNGKNAAFAAVLLLTLLIYG. The Cytoplasmic segment spans residues 96–115; sequence SKYISQRNHTCACGNNHSSH.

This sequence belongs to the Tymovirales TGBp2 protein family.

The protein localises to the host endoplasmic reticulum membrane. Functionally, plays a role in viral cell-to-cell propagation, by facilitating genome transport to neighboring plant cells through plasmosdesmata,. This is Movement protein TGB2 from Potato virus X (PVX).